The chain runs to 423 residues: Putative protein phosphatase 2C 50 (423 aa).

In terms of domain architecture, PPM-type phosphatase spans 52–380 (IFAFPFPTGT…DNMAAVVVPL (329 aa)). Mn(2+)-binding residues include D74, G75, D320, and D371.

The protein belongs to the PP2C family. Mg(2+) is required as a cofactor. Requires Mn(2+) as cofactor.

The enzyme catalyses O-phospho-L-seryl-[protein] + H2O = L-seryl-[protein] + phosphate. It carries out the reaction O-phospho-L-threonyl-[protein] + H2O = L-threonyl-[protein] + phosphate. This Arabidopsis thaliana (Mouse-ear cress) protein is Putative protein phosphatase 2C 50.